A 574-amino-acid polypeptide reads, in one-letter code: ATP-dependent lipid A-core flippase (574 aa).

4 consecutive transmembrane segments (helical) span residues 11 to 31, 60 to 80, 156 to 176, and 244 to 264; these read LLSY…GFGI, WFPL…FMGG, YTNW…GVLV, and LNSP…VWLA. The 282-residue stretch at 23–304 folds into the ABC transmembrane type-1 domain; that stretch reads LLVLVGFGIN…LTDVNEKLQR (282 aa). Positions 335 to 570 constitute an ABC transporter domain; that stretch reads VRFDHVTLEY…QGAYFQLHQR (236 aa). 368 to 375 provides a ligand contact to ATP; that stretch reads GRSGAGKT.

This sequence belongs to the ABC transporter superfamily. Lipid exporter (TC 3.A.1.106) family. Homodimer.

The protein localises to the cell inner membrane. The catalysed reaction is ATP + H2O + lipid A-core oligosaccharideSide 1 = ADP + phosphate + lipid A-core oligosaccharideSide 2.. Involved in lipopolysaccharide (LPS) biosynthesis. Translocates lipid A-core from the inner to the outer leaflet of the inner membrane. Transmembrane domains (TMD) form a pore in the inner membrane and the ATP-binding domain (NBD) is responsible for energy generation. The sequence is that of ATP-dependent lipid A-core flippase from Acinetobacter baylyi (strain ATCC 33305 / BD413 / ADP1).